Consider the following 298-residue polypeptide: Probable deoxyhypusine synthase 2 (298 aa).

Lys-259 acts as the Nucleophile in catalysis.

Belongs to the deoxyhypusine synthase family. NAD(+) is required as a cofactor.

The enzyme catalyses [eIF5A protein]-L-lysine + spermidine = [eIF5A protein]-deoxyhypusine + propane-1,3-diamine. The protein operates within protein modification; eIF5A hypusination. Its function is as follows. Catalyzes the NAD-dependent oxidative cleavage of spermidine and the subsequent transfer of the butylamine moiety of spermidine to the epsilon-amino group of a specific lysine residue of the eIF-5A precursor protein to form the intermediate deoxyhypusine residue. This chain is Probable deoxyhypusine synthase 2 (dys2), found in Archaeoglobus fulgidus (strain ATCC 49558 / DSM 4304 / JCM 9628 / NBRC 100126 / VC-16).